Here is a 32-residue protein sequence, read N- to C-terminus: Hemocyanin C chain (32 aa).

It belongs to the tyrosinase family. Hemocyanin subfamily. In terms of tissue distribution, hemolymph.

It is found in the secreted. It localises to the extracellular space. Functionally, hemocyanins are copper-containing oxygen carriers occurring freely dissolved in the hemolymph of many mollusks and arthropods. This is Hemocyanin C chain from Cherax destructor (Common yabby crayfish).